A 128-amino-acid polypeptide reads, in one-letter code: Large ribosomal subunit protein bL19 (128 aa).

It belongs to the bacterial ribosomal protein bL19 family.

In terms of biological role, this protein is located at the 30S-50S ribosomal subunit interface and may play a role in the structure and function of the aminoacyl-tRNA binding site. The chain is Large ribosomal subunit protein bL19 from Janthinobacterium sp. (strain Marseille) (Minibacterium massiliensis).